Reading from the N-terminus, the 453-residue chain is Autophagy-related protein 21 (453 aa).

One copy of the WD 1 repeat lies at 4 to 137 (LRFNQDASCC…NDQIFIYDIS (134 aa)). The tract at residues 177–207 (GNELDRIRSKSNNNNDQTNSDNGRSRTYSIN) is disordered. Residues 187-198 (SNNNNDQTNSDN) are compositionally biased toward low complexity. WD repeat units lie at residues 252–347 (NLKP…RTDD) and 419–453 (FDNK…SHFI). The L/FRRG motif motif lies at 310 to 314 (FRRGS).

This sequence belongs to the WD repeat PROPPIN family.

It localises to the cytoplasm. It is found in the membrane. The protein localises to the vacuole membrane. Required for cytoplasm to vacuole transport (Cvt) vesicles formation and mitophagy. Involved in binding of phosphatidylethanolamine to ATG8 and in recruitment of ATG8 and ATG5 to the pre-autophagosomal structure. Protects ATG8 from ARG4-mediated cleavage. This is Autophagy-related protein 21 (ATG21) from Candida glabrata (strain ATCC 2001 / BCRC 20586 / JCM 3761 / NBRC 0622 / NRRL Y-65 / CBS 138) (Yeast).